Reading from the N-terminus, the 375-residue chain is Nucleosome assembly protein 1-like 4 (375 aa).

A disordered region spans residues 1 to 28 (MAENSLSDGGPADSVEAAKNASNTEKLT). At Ala-2 the chain carries N-acetylalanine. A phosphoserine mark is found at Ser-5, Ser-7, and Ser-49. Thr-51 carries the phosphothreonine modification. Ser-53 and Ser-54 each carry phosphoserine. Thr-58 is subject to Phosphothreonine. Position 105 is an N6-acetyllysine (Lys-105). The residue at position 125 (Ser-125) is a Phosphoserine. Lys-146 is modified (N6-acetyllysine). The Nuclear localization signal motif lies at 265-271 (IKKKQKH). At Ser-304 the chain carries Phosphoserine. A disordered region spans residues 339–375 (AIEDDDNFEEGEEGEEEELEGDEEGEDEDDADVNPKV).

It belongs to the nucleosome assembly protein (NAP) family. In terms of assembly, interacts with core (H2A, H2B, H3, H4) and linker (H1) histones. Post-translationally, polyglutamylated and polyglycylated. These 2 modifications occur exclusively on glutamate residues and result in either polyglutamate or polyglycine chains on the gamma-carboxyl group. Both modifications can coexist on the same protein on adjacent residues, and lowering polyglycylation levels increases polyglutamylation, and reciprocally. Polyglutamylated by TTLL4. Phosphorylated at the G0/G1 boundary but it is not phosphorylated in S-phase. Phosphorylated protein remains in the cytoplasm in a complex with histones during the G0/G1 transition, whereas dephosphorylation triggers its transport into the nucleus at the G1/S-boundary.

The protein resides in the nucleus. Its subcellular location is the cytoplasm. Functionally, acts as a histone chaperone in nucleosome assembly. In condensing spermatids, mediates the loading of the heterodimer composed of histones H2AB1 and H2BC1/TH2B onto the nucleosomes, thereby promoting the replacement of histones to protamine in male germ cells. The chain is Nucleosome assembly protein 1-like 4 (Nap1l4) from Mus musculus (Mouse).